The following is a 444-amino-acid chain: Glutamate--methylamine ligase (444 aa).

The 84-residue stretch at His-14–Lys-97 folds into the GS beta-grasp domain. A GS catalytic domain is found at Thr-103–Tyr-444.

This sequence belongs to the glutamine synthetase family. Type 3 subfamily. Mg(2+) is required as a cofactor.

It catalyses the reaction methylamine + L-glutamate + ATP = N(5)-methyl-L-glutamine + ADP + phosphate + H(+). It carries out the reaction ethylamine + L-glutamate + ATP = N(5)-ethyl-L-glutamine + ADP + phosphate + H(+). Formation of theanine is repressed by a high concentration of glutamic acid. Catalyzes the formation of N(5)-methyl-L-glutamine from glutamate and methylamine. In vitro, can also use ethylamine, hydroxylamine and ammonia, with 75%, 40% and 1% activity compared to methylamine, respectively. The protein is Glutamate--methylamine ligase of Methylovorus mays.